A 203-amino-acid chain; its full sequence is Large ribosomal subunit protein bL25 (203 aa).

Belongs to the bacterial ribosomal protein bL25 family. CTC subfamily. In terms of assembly, part of the 50S ribosomal subunit; part of the 5S rRNA/L5/L18/L25 subcomplex. Contacts the 5S rRNA. Binds to the 5S rRNA independently of L5 and L18.

This is one of the proteins that binds to the 5S RNA in the ribosome where it forms part of the central protuberance. The protein is Large ribosomal subunit protein bL25 of Rickettsia prowazekii (strain Madrid E).